The primary structure comprises 489 residues: Long chain base biosynthesis protein 2a (489 aa).

A helical transmembrane segment spans residues 2-22; the sequence is ITIPYLTAVSTYFSYGLLFAF. At Lys311 the chain carries N6-(pyridoxal phosphate)lysine.

It belongs to the class-II pyridoxal-phosphate-dependent aminotransferase family. Heterodimer with LCB1. Component of the serine palmitoyltransferase (SPT) complex, composed of LCB1 and LCB2 (LCB2a or LCB2b). It depends on pyridoxal 5'-phosphate as a cofactor. In terms of tissue distribution, ubiquitous. Detected in leaves, roots, stems, flowers and at a lower level in mature seeds.

It is found in the endoplasmic reticulum membrane. It carries out the reaction L-serine + hexadecanoyl-CoA + H(+) = 3-oxosphinganine + CO2 + CoA. It participates in lipid metabolism; sphingolipid metabolism. Serine palmitoyltransferase (SPT). The heterodimer formed with LCB1 constitutes the catalytic core. Involved in the regulation of the programmed cell death (PCD) signaling pathway. Plays an important role during male gametogenesis and embryogenesis. The protein is Long chain base biosynthesis protein 2a (LCB2a) of Arabidopsis thaliana (Mouse-ear cress).